A 406-amino-acid chain; its full sequence is MAVMDPWLLITIIVGFGMAWAIGANDAANSMSTAVGAKAITPKQAVLIAGVLEFTGAYFFGKSVTETIRKGILYPDRITDPTVLIYGSVAALLAATIWLVIATKFGLPVSTTHSIIGGIVGYGIVYAGFSIVNWGKMTQVVLSWILSPIIGAIMAFLVFKALTKSIFERKDPVRSSKIWSPFWIGLAFVVIGTMFYIKVLHGKSLKTGVLFYGIPAGLVVFLILFLTLRVKFPSSDPFIGVESIFRRVQVITSGYVALAHGANDVANAIGPVAAVYAVATMGMAGMKVPVPRWILAMGGLGIAIGVATYGYRVMETVGKKITELTNTRGFTIDFSAATVVLVASWLGLPISTTHVVVGAVIGVGLARGVKAINKDIVRDIIISWFVTVPVAALISAFLFKILMIVG.

The next 10 helical transmembrane spans lie at 2 to 22, 45 to 65, 82 to 102, 115 to 135, 139 to 159, 182 to 202, 208 to 228, 288 to 308, 324 to 346, and 385 to 405; these read AVMD…AWAI, AVLI…KSVT, TVLI…LVIA, IIGG…VNWG, QVVL…FLVF, FWIG…VLHG, GVLF…FLTL, VPVP…GVAT, LTNT…ASWL, and FVTV…LMIV.

Belongs to the inorganic phosphate transporter (PiT) (TC 2.A.20) family.

Its subcellular location is the cell membrane. In terms of biological role, potential transporter for phosphate. In Thermococcus kodakarensis (strain ATCC BAA-918 / JCM 12380 / KOD1) (Pyrococcus kodakaraensis (strain KOD1)), this protein is Putative phosphate permease TK2061.